We begin with the raw amino-acid sequence, 169 residues long: Probable phospholipid hydroperoxide glutathione peroxidase (169 aa).

The active site involves cysteine 43.

This sequence belongs to the glutathione peroxidase family.

It localises to the cytoplasm. The enzyme catalyses a hydroperoxy polyunsaturated fatty acid + 2 glutathione = a hydroxy polyunsaturated fatty acid + glutathione disulfide + H2O. Its function is as follows. Protects cells and enzymes from oxidative damage, by catalyzing the reduction of hydrogen peroxide, lipid peroxides and organic hydroperoxide, by glutathione. In Nicotiana tabacum (Common tobacco), this protein is Probable phospholipid hydroperoxide glutathione peroxidase.